We begin with the raw amino-acid sequence, 741 residues long: Protein ACCUMULATION AND REPLICATION OF CHLOROPLASTS 3, chloroplastic (741 aa).

Residues 1–41 (MPISMELPVFSTLRVPLFSRLALLPTFGVPFSSLGATTRLN) constitute a chloroplast transit peptide. 2 disordered regions span residues 444 to 465 (ENGD…SRLD) and 539 to 558 (DSRE…SSDT). Residues 451–465 (YPLKEGEPSRNSRLD) show a composition bias toward basic and acidic residues. A compositionally biased stretch (polar residues) spans 546–558 (FNPNGSTKDSSDT). MORN repeat units lie at residues 612–628 (QGGL…GDGS), 630–652 (YDGM…NGDV), and 653–675 (FQGT…KGDR).

In terms of assembly, self-interacts. Interacts with FTSZ, CDP1/PARC6 (via N-terminus), MIND1 and MINE1. Part of a complex made of ARC3, ARC6, FTSZ1 and FTSZ2. Recruited to the middle of the plastid by CDP1/PARC6 where subsequent complex made of CDP1/PARC6, ARC3 and FtsZ proteins can form; this complex enhances the dynamics of Z rings during chloroplast division. Binding to FTSZ2-1 is enabled by ARC6.

The protein resides in the plastid. Its subcellular location is the chloroplast outer membrane. It localises to the chloroplast stroma. Functionally, together with MIND1 and MCD1, regulates FtsZ ring positioning in chloroplasts in an ARC6-dependent manner. Z-ring accessory protein involved in the initiation of plastid division and division site placement (might functionally replace bacterial MinC). Acts as a disassembly factor that accelerates fragmentation and depolymerization of existing FtsZ2 filaments by enhancing FTSZ2 GTPase activity, thus leading to the conversion of FTSZ2 bound GTP into GDP, a process which triggers FtsZ2 filaments destabilization. Prevents misplaced Z-ring formation at chloroplast stroma nondivision sites. May control the rate of chloroplast expansion. Seems to influence stromule (stroma-filled tubular extensions of the plastid envelope membrane) length and frequency. The sequence is that of Protein ACCUMULATION AND REPLICATION OF CHLOROPLASTS 3, chloroplastic from Arabidopsis thaliana (Mouse-ear cress).